A 548-amino-acid chain; its full sequence is Chaperonin GroEL (548 aa).

ATP is bound by residues 30–33, Lys51, 87–91, Gly415, and Asp496; these read TLGP and DGTTT. Residues 527 to 548 are disordered; that stretch reads SDKEDAMPPMRGGMGGMGGMDF. A compositionally biased stretch (gly residues) spans 538–548; sequence GGMGGMGGMDF.

It belongs to the chaperonin (HSP60) family. Forms a cylinder of 14 subunits composed of two heptameric rings stacked back-to-back. Interacts with the co-chaperonin GroES.

It localises to the cytoplasm. The catalysed reaction is ATP + H2O + a folded polypeptide = ADP + phosphate + an unfolded polypeptide.. In terms of biological role, together with its co-chaperonin GroES, plays an essential role in assisting protein folding. The GroEL-GroES system forms a nano-cage that allows encapsulation of the non-native substrate proteins and provides a physical environment optimized to promote and accelerate protein folding. The sequence is that of Chaperonin GroEL from Rickettsia akari (strain Hartford).